The primary structure comprises 1130 residues: Serine/threonine-protein kinase LATS1 (1130 aa).

A compositionally biased stretch (basic and acidic residues) spans 1–11; it reads MKRSEKPEGYR. The disordered stretch occupies residues 1–71; the sequence is MKRSEKPEGY…PRQVRNPPKF (71 aa). Over residues 19-30 the composition is skewed to polar residues; the sequence is PASNYTVSSRQM. Residues 46 to 64 are compositionally biased toward basic and acidic residues; it reads DAAKAEHNMSKMSTEDPRQ. The region spanning 100–141 is the UBA domain; the sequence is EVNPQMLQDLQAAGFDEDMVIQALQKTNNRSIEAAIEFISKM. The segment at 149-276 is disordered; it reads EQMAAAAARP…SWEPNSQTKR (128 aa). The span at 167–179 shows a compositional bias: polar residues; sequence NVQQSVNRKQSWK. A compositionally biased stretch (pro residues) spans 235–268; sequence NPPPPPQVRSVTPPPPPRGQTPPPRGTTPPPPSW. The residue at position 246 (threonine 246) is a Phosphothreonine. Serine 278 bears the Phosphoserine mark. Disordered regions lie at residues 294-321, 365-405, 432-484, and 515-631; these read GAWQ…RGIS, AGTV…NGSI, NWPQ…PSAT, and THPS…ESRI. A compositionally biased stretch (pro residues) spans 300 to 312; that stretch reads YPPPPLNTSPMNP. Positions 373–376 match the PPxY motif 1 motif; that stretch reads PPPY. Residues 381-405 are compositionally biased toward polar residues; that stretch reads ANGQSPSALQTGGSAAPSSYTNGSI. Residues 434 to 447 are compositionally biased toward low complexity; the sequence is PQSSSAPAQSSPSS. Positions 454-482 are enriched in polar residues; that stretch reads WQPNIPVRSNSFNNPLGNRASHSANSQPS. The residue at position 464 (serine 464) is a Phosphoserine; by NUAK1 and NUAK2. The segment at 526–655 is interaction with YAP1; it reads TVQPSPFPEG…HVENVLKSHQ (130 aa). The short motif at 556–559 is the PPxY motif 2 element; the sequence is PPPY. Basic and acidic residues predominate over residues 579–609; it reads PSKEDQPSLPKEDESEKSYENVDSGDKEKKQ. Serine 613 is modified (phosphoserine). Basic and acidic residues predominate over residues 621 to 630; sequence KKDEERRESR. Serine 674 carries the phosphoserine modification. Residues 705–1010 form the Protein kinase domain; sequence FVKIKTLGIG…ADEIKAHPFF (306 aa). ATP is bound by residues 711–719 and lysine 734; that span reads LGIGAFGEV. The active-site Proton acceptor is the aspartate 828. Phosphoserine; by STK3/MST2 is present on serine 909. An AGC-kinase C-terminal domain is found at 1011 to 1090; the sequence is KTIDFSSDLR…RRFFDDNGYP (80 aa). Threonine 1079 is subject to Phosphothreonine; by STK3/MST2. Positions 1104 to 1130 are disordered; the sequence is SQGSEQQSDEDDQNTGSEIKNRDLVYV.

This sequence belongs to the protein kinase superfamily. AGC Ser/Thr protein kinase family. As to quaternary structure, complexes with CDK1 in early mitosis. LATS1-associated CDK1 has no mitotic cyclin partner and no apparent kinase activity. Binds phosphorylated ZYX, locating this protein to the mitotic spindle and suggesting a role for actin regulatory proteins during mitosis. Binds to and colocalizes with LIMK1 at the actomyosin contractile ring during cytokinesis. Interacts (via PPxY motif 2) with YAP1 (via WW domains). Interacts with MOB1A and MOB1B. Interacts with LIMD1, WTIP and AJUBA. Interacts with ESR1, DCAF1 and DCAF13; probably recruits DCAF1 and DCAF13 to ESR1 to promote ESR1 ubiquitination and ubiquitin-mediated proteasomal degradation. Interacts with STK3/MST2; this interaction is inhibited in the presence of DLG5. Interacts with SCRIB in the presence of DLG5. Interacts with WWTR1/TAZ. Interacts with WWC1, WWC2 and WWC3 (via their WW domains). Requires Mg(2+) as cofactor. Post-translationally, autophosphorylated and phosphorylated during M-phase of the cell cycle. Phosphorylated by STK3/MST2 at Ser-909 and Thr-1079, which results in its activation. Phosphorylated by MAP4Ks; in parallel to STK3/MST2 and resulting to its activation. Phosphorylation at Ser-464 by NUAK1 and NUAK2 leads to decreased protein level and is required to regulate cellular senescence and cellular ploidy. Expressed in all adult tissues examined except for lung and kidney.

The protein resides in the cytoplasm. It localises to the cytoskeleton. Its subcellular location is the microtubule organizing center. It is found in the centrosome. The protein localises to the spindle. The protein resides in the midbody. It localises to the spindle pole body. It carries out the reaction L-seryl-[protein] + ATP = O-phospho-L-seryl-[protein] + ADP + H(+). The catalysed reaction is L-threonyl-[protein] + ATP = O-phospho-L-threonyl-[protein] + ADP + H(+). In terms of biological role, negative regulator of YAP1 in the Hippo signaling pathway that plays a pivotal role in organ size control and tumor suppression by restricting proliferation and promoting apoptosis. The core of this pathway is composed of a kinase cascade wherein STK3/MST2 and STK4/MST1, in complex with its regulatory protein SAV1, phosphorylates and activates LATS1/2 in complex with its regulatory protein MOB1, which in turn phosphorylates and inactivates YAP1 oncoprotein and WWTR1/TAZ. Phosphorylation of YAP1 by LATS1 inhibits its translocation into the nucleus to regulate cellular genes important for cell proliferation, cell death, and cell migration. Acts as a tumor suppressor which plays a critical role in maintenance of ploidy through its actions in both mitotic progression and the G1 tetraploidy checkpoint. Negatively regulates G2/M transition by down-regulating CDK1 kinase activity. Involved in the control of p53 expression. Affects cytokinesis by regulating actin polymerization through negative modulation of LIMK1. May also play a role in endocrine function. Plays a role in mammary gland epithelial cell differentiation, both through the Hippo signaling pathway and the intracellular estrogen receptor signaling pathway by promoting the degradation of ESR1. Acts as an activator of the NLRP3 inflammasome by mediating phosphorylation of 'Ser-265' of NLRP3 following NLRP3 palmitoylation, promoting NLRP3 activation by NEK7. This Homo sapiens (Human) protein is Serine/threonine-protein kinase LATS1.